Here is a 219-residue protein sequence, read N- to C-terminus: Transcriptional regulator AcuR (219 aa).

Positions 1 to 25 (MPLTDTPPSVPQKPRRGRPRGAPDA) are disordered. In terms of domain architecture, HTH tetR-type spans 26–86 (SLAHQSLIRA…ALIEAYDTYF (61 aa)). The segment at residues 49–68 (GVDEILKAARVPKGSFYHYF) is a DNA-binding region (H-T-H motif).

A transcriptional repressor for its operon. Probably binds to 2 operator sequences in the promoter. The polypeptide is Transcriptional regulator AcuR (acuR) (Cereibacter sphaeroides (strain ATCC 17023 / DSM 158 / JCM 6121 / CCUG 31486 / LMG 2827 / NBRC 12203 / NCIMB 8253 / ATH 2.4.1.) (Rhodobacter sphaeroides)).